A 351-amino-acid polypeptide reads, in one-letter code: Histidine-rich glycoprotein (351 aa).

The signal sequence occupies residues 1-23 (MFTSLKKVATFSFLVWISQYSGS). The propeptide occupies 24 to 47 (NSCSSSLVKHIPQTGSNLTFDRVL). Asparagine 40 is a glycosylation site (N-linked (GlcNAc...) asparagine). Basic and acidic residues predominate over residues 57–91 (LHEEHHHHHPEEHHEPHHEEHHHHHPEEHHEPHHE). The tract at residues 57 to 351 (LHEEHHHHHP…DAHHHHHHHH (295 aa)) is disordered. 6 tandem repeats follow at residues 59–74 (EEHHHHHPEEHHEPHH), 75–90 (EEHHHHHPEEHHEPHH), 91–107 (EEHHHHHPHPHHHHHHH), 108–123 (PPHHHHHLGHHHHHHH), 124–138 (AAHHHHHEEHHHHHH), and 139–153 (AAHHHHHEEHHHHHH). The interval 59-90 (EEHHHHHPEEHHEPHHEEHHHHHPEEHHEPHH) is 2 X 16 AA tandem repeats. The interval 91–123 (EEHHHHHPHPHHHHHHHPPHHHHHLGHHHHHHH) is 2 X 17 AA tandem repeats. Residues 92-351 (EHHHHHPHPH…DAHHHHHHHH (260 aa)) are compositionally biased toward basic residues. A 2 X 15 AA tandem repeats region spans residues 124–153 (AAHHHHHEEHHHHHHAAHHHHHEEHHHHHH). The interval 173–351 (APHHHHHHHH…DAHHHHHHHH (179 aa)) is 18 X 10 AA tandem repeats.

The protein is Histidine-rich glycoprotein of Plasmodium lophurae.